The primary structure comprises 179 residues: Acireductone dioxygenase (179 aa).

A disordered region spans residues 1–21 (MVQAWYMDDSTEDQRKPHHLQ). Positions 88, 90, 94, and 133 each coordinate Fe(2+). Ni(2+)-binding residues include His-88, His-90, Glu-94, and His-133.

The protein belongs to the acireductone dioxygenase (ARD) family. Monomer. Interacts with MMP14. The cofactor is Fe(2+). It depends on Ni(2+) as a cofactor.

The protein localises to the cytoplasm. It is found in the nucleus. It localises to the cell membrane. The enzyme catalyses 1,2-dihydroxy-5-(methylsulfanyl)pent-1-en-3-one + O2 = 4-methylsulfanyl-2-oxobutanoate + formate + 2 H(+). It carries out the reaction 1,2-dihydroxy-5-(methylsulfanyl)pent-1-en-3-one + O2 = 3-(methylsulfanyl)propanoate + CO + formate + 2 H(+). Its pathway is amino-acid biosynthesis; L-methionine biosynthesis via salvage pathway; L-methionine from S-methyl-5-thio-alpha-D-ribose 1-phosphate: step 5/6. Catalyzes 2 different reactions between oxygen and the acireductone 1,2-dihydroxy-3-keto-5-methylthiopentene (DHK-MTPene) depending upon the metal bound in the active site. Fe-containing acireductone dioxygenase (Fe-ARD) produces formate and 2-keto-4-methylthiobutyrate (KMTB), the alpha-ketoacid precursor of methionine in the methionine recycle pathway. Ni-containing acireductone dioxygenase (Ni-ARD) produces methylthiopropionate, carbon monoxide and formate, and does not lie on the methionine recycle pathway. The chain is Acireductone dioxygenase (adi1) from Xenopus tropicalis (Western clawed frog).